Reading from the N-terminus, the 179-residue chain is Adenine phosphoribosyltransferase (179 aa).

The protein belongs to the purine/pyrimidine phosphoribosyltransferase family. Homodimer.

It is found in the cytoplasm. It carries out the reaction AMP + diphosphate = 5-phospho-alpha-D-ribose 1-diphosphate + adenine. The protein operates within purine metabolism; AMP biosynthesis via salvage pathway; AMP from adenine: step 1/1. Catalyzes a salvage reaction resulting in the formation of AMP, that is energically less costly than de novo synthesis. The sequence is that of Adenine phosphoribosyltransferase from Helicobacter pylori (strain G27).